The chain runs to 293 residues: Protease HtpX (293 aa).

The next 2 helical transmembrane spans lie at isoleucine 4–leucine 24 and valine 32–leucine 52. Position 139 (histidine 139) interacts with Zn(2+). The active site involves glutamate 140. Histidine 143 is a binding site for Zn(2+). A run of 2 helical transmembrane segments spans residues isoleucine 158–methionine 178 and methionine 193–isoleucine 213. Glutamate 222 contacts Zn(2+).

Belongs to the peptidase M48B family. Zn(2+) is required as a cofactor.

It is found in the cell inner membrane. This is Protease HtpX from Erwinia tasmaniensis (strain DSM 17950 / CFBP 7177 / CIP 109463 / NCPPB 4357 / Et1/99).